The sequence spans 1008 residues: MSVEQFINDQLHSIVGISDRSICQYVHALAKKAKSAPDLVEKLRDAGDFPISPAIQSFADQLMSRMPRQATSARQRGPTTAELAEQELNRLNRAVGVLEDYSASSTKTKNVRKRKESSSEDDEAPIKASKPGKSVKPSKSDDSESDIEAMEAKLDADIAERDALAARINKKEKDKTRNVMEKKRDDNKDKEGSSMDKLREESRRQYLKKRKVDKLEELEAIVHDDQTLFAREKLTKREKADMEYRKKVLEYTKAHGKAGDVMKMKRYHLPDASTKQIPSQYVEDDEEDFRPGGDGAKWEEEQLMASMLHLGAKDAKRKEQEFELLLDEKVDFIQALQMPGTNEEVVETEAEKKKMSIEETRKSLPVYAFRDAFIEAVKEHQVLIIEGETGSGKTTQLPQYLYEAGFCEGGKRIGCTQPRRVAAMSVAARVADEVGCKLGTQVGYSIRFEDCTSEKTVLKYMTDGMLLREFLNEPDLASYSVMMIDEAHERTLHTDILFGLVKDIARFRKDLKLLISSATLDAEKFSSFFDDAPIFRIPGRRFPVDIYYTQAPEADYVDAAIVTIMQIHLTQPLPGDILVFLTGQEEIETVQEALMERSKALGSKIKELIPLPVYANLPSDLQAKIFEPTPKDARKVVLATNIAETSVTIDGINYVIDPGFSKQNSFDARSGVEHLHVVTISKAAANQRAGRAGRTGPGKCFRLYTAWAYKHELEEQPIPEIQRTNLGNVVLMLKSLGIHDLVHFDFLDPPPQETLVIALEQLYALGALNHRGELTKLGRRMAEFPCDPCMSKMIIASEKYECSEEIVTIAAMLSCNAAVFYRPKAQVIHADSARKGFWSPAGDHITLMNVYNKWQESSFSQRWCVENYVQHRTMKRARDVRDQLVGLLERVEIETKSSTDTIKIRKAITAGYFYNVSKLDNTGHYKTVKHKHTTHPHPNSCLFEETPRWVVYFELVFTSKEFMREMSEIESGWLLEVAPHYYKGRELEDATNKKMPKNKGKSGKDLER.

Disordered regions lie at residues 104–146 and 169–202; these read SSTK…SESD and NKKEKDKTRNVMEKKRDDNKDKEGSSMDKLREES. The segment covering 127–137 has biased composition (low complexity); sequence KASKPGKSVKP. The 165-residue stretch at 374–538 folds into the Helicase ATP-binding domain; the sequence is IEAVKEHQVL…FDDAPIFRIP (165 aa). 387-394 is a binding site for ATP; that stretch reads GETGSGKT. Positions 485 to 488 match the DEAH box motif; the sequence is DEAH. The 175-residue stretch at 563-737 folds into the Helicase C-terminal domain; that stretch reads TIMQIHLTQP…NVVLMLKSLG (175 aa). A disordered region spans residues 988–1008; it reads EDATNKKMPKNKGKSGKDLER.

It belongs to the DEAD box helicase family. DEAH subfamily. DDX16/PRP8 sub-subfamily. In terms of assembly, interacts with mep-1 and smn-1.

Its subcellular location is the nucleus. It catalyses the reaction ATP + H2O = ADP + phosphate + H(+). Functionally, ATP-binding RNA helicase involved in pre-mRNA splicing. Operates during embryogenesis. This chain is Probable pre-mRNA-splicing factor ATP-dependent RNA helicase mog-4 (mog-4), found in Caenorhabditis elegans.